Here is a 307-residue protein sequence, read N- to C-terminus: 4-hydroxy-tetrahydrodipicolinate synthase (307 aa).

Residue T57 coordinates pyruvate. Y145 (proton donor/acceptor) is an active-site residue. K173 (schiff-base intermediate with substrate) is an active-site residue. A pyruvate-binding site is contributed by V215.

The protein belongs to the DapA family. As to quaternary structure, homotetramer; dimer of dimers.

Its subcellular location is the cytoplasm. The enzyme catalyses L-aspartate 4-semialdehyde + pyruvate = (2S,4S)-4-hydroxy-2,3,4,5-tetrahydrodipicolinate + H2O + H(+). Its pathway is amino-acid biosynthesis; L-lysine biosynthesis via DAP pathway; (S)-tetrahydrodipicolinate from L-aspartate: step 3/4. Functionally, catalyzes the condensation of (S)-aspartate-beta-semialdehyde [(S)-ASA] and pyruvate to 4-hydroxy-tetrahydrodipicolinate (HTPA). The polypeptide is 4-hydroxy-tetrahydrodipicolinate synthase (Leptospira interrogans serogroup Icterohaemorrhagiae serovar copenhageni (strain Fiocruz L1-130)).